The chain runs to 67 residues: Small ribosomal subunit protein bS21 (67 aa).

This sequence belongs to the bacterial ribosomal protein bS21 family.

This chain is Small ribosomal subunit protein bS21 (rpsU), found in Aquifex aeolicus (strain VF5).